A 503-amino-acid chain; its full sequence is Geissoschizine oxidase (503 aa).

The chain crosses the membrane as a helical span at residues 7–27; that stretch reads FSSPSFFFLLPFLFLLIKPLI. Cys441 is a binding site for heme.

It belongs to the cytochrome P450 family. It depends on heme as a cofactor.

The protein localises to the membrane. It carries out the reaction (19E)-geissoschizine + reduced [NADPH--hemoprotein reductase] + O2 = akuammicine + formate + oxidized [NADPH--hemoprotein reductase] + H2O + H(+). It catalyses the reaction (19E)-geissoschizine + reduced [NADPH--hemoprotein reductase] + O2 = 3,17-didehydrostemmadenine + oxidized [NADPH--hemoprotein reductase] + 2 H2O. The catalysed reaction is 3,17-didehydrostemmadenine = 17-dehydropreakuammicine. The protein operates within alkaloid biosynthesis. In terms of biological role, monooxygenase involved in the biosynthesis of curare monoterpene indole alkaloids (MIAs), natural products such as diaboline, a pharmacologically active compound used to regulate blood pressure. Curare alkaloids act as animal glycine receptor antagonists. Catalyzes the conversion of geissoschizine to dehydropreakuammicine by cyclization, which is spontaneously converted into akuammicine by aromatization. The chain is Geissoschizine oxidase from Strychnos sp.